A 109-amino-acid polypeptide reads, in one-letter code: Iron-sulfur cluster assembly protein CyaY (109 aa).

It belongs to the frataxin family.

In terms of biological role, involved in iron-sulfur (Fe-S) cluster assembly. May act as a regulator of Fe-S biogenesis. In Burkholderia lata (strain ATCC 17760 / DSM 23089 / LMG 22485 / NCIMB 9086 / R18194 / 383), this protein is Iron-sulfur cluster assembly protein CyaY.